A 427-amino-acid chain; its full sequence is 3-phosphoshikimate 1-carboxyvinyltransferase (427 aa).

3-phosphoshikimate-binding residues include Lys22, Ser23, and Arg27. Lys22 lines the phosphoenolpyruvate pocket. Gly96 and Arg124 together coordinate phosphoenolpyruvate. 3-phosphoshikimate is bound by residues Ser169, Ser170, Gln171, Ser197, Asp313, Asn336, and Lys340. Position 171 (Gln171) interacts with phosphoenolpyruvate. The active-site Proton acceptor is Asp313. Arg344, Arg386, and Lys411 together coordinate phosphoenolpyruvate.

Belongs to the EPSP synthase family. In terms of assembly, monomer.

Its subcellular location is the cytoplasm. The catalysed reaction is 3-phosphoshikimate + phosphoenolpyruvate = 5-O-(1-carboxyvinyl)-3-phosphoshikimate + phosphate. Its pathway is metabolic intermediate biosynthesis; chorismate biosynthesis; chorismate from D-erythrose 4-phosphate and phosphoenolpyruvate: step 6/7. In terms of biological role, catalyzes the transfer of the enolpyruvyl moiety of phosphoenolpyruvate (PEP) to the 5-hydroxyl of shikimate-3-phosphate (S3P) to produce enolpyruvyl shikimate-3-phosphate and inorganic phosphate. This chain is 3-phosphoshikimate 1-carboxyvinyltransferase, found in Klebsiella pneumoniae subsp. pneumoniae (strain ATCC 700721 / MGH 78578).